The chain runs to 390 residues: GTPase Obg (390 aa).

The region spanning 1-159 (MKFVDEASVK…RELRLELLLL (159 aa)) is the Obg domain. Residues 160 to 333 (ADVGMLGLPN…LCFKLGEFME (174 aa)) enclose the OBG-type G domain. Residues 166 to 173 (GLPNAGKS), 191 to 195 (FTTLI), 213 to 216 (DIPG), 283 to 286 (NKVD), and 314 to 316 (SAV) each bind GTP. Mg(2+) contacts are provided by Ser173 and Thr193.

It belongs to the TRAFAC class OBG-HflX-like GTPase superfamily. OBG GTPase family. As to quaternary structure, monomer. It depends on Mg(2+) as a cofactor.

The protein resides in the cytoplasm. Its function is as follows. An essential GTPase which binds GTP, GDP and possibly (p)ppGpp with moderate affinity, with high nucleotide exchange rates and a fairly low GTP hydrolysis rate. Plays a role in control of the cell cycle, stress response, ribosome biogenesis and in those bacteria that undergo differentiation, in morphogenesis control. This chain is GTPase Obg, found in Vibrio atlanticus (strain LGP32) (Vibrio splendidus (strain Mel32)).